The chain runs to 107 residues: UPF0045 protein in glkA 3'region (107 aa).

The protein belongs to the UPF0045 family.

This chain is UPF0045 protein in glkA 3'region (dglA), found in Staphylococcus xylosus.